Here is a 373-residue protein sequence, read N- to C-terminus: D-alanine--D-alanine ligase A (373 aa).

Residues 146-355 (KRLAEFAGIP…YGELLSRLVD (210 aa)) enclose the ATP-grasp domain. 179-234 (VEGLSLPVFVKPCNMGSSVGIHKVKTQDALEAALDDAFRYDVKVLVQQGIDAREIE) is a binding site for ATP. Asp308, Glu322, and Asn324 together coordinate Mg(2+).

It belongs to the D-alanine--D-alanine ligase family. It depends on Mg(2+) as a cofactor. Mn(2+) serves as cofactor.

The protein resides in the cytoplasm. The catalysed reaction is 2 D-alanine + ATP = D-alanyl-D-alanine + ADP + phosphate + H(+). It participates in cell wall biogenesis; peptidoglycan biosynthesis. Cell wall formation. The polypeptide is D-alanine--D-alanine ligase A (Bradyrhizobium diazoefficiens (strain JCM 10833 / BCRC 13528 / IAM 13628 / NBRC 14792 / USDA 110)).